A 250-amino-acid polypeptide reads, in one-letter code: 5-oxoprolinase subunit A (250 aa).

The protein belongs to the LamB/PxpA family. In terms of assembly, forms a complex composed of PxpA, PxpB and PxpC.

The enzyme catalyses 5-oxo-L-proline + ATP + 2 H2O = L-glutamate + ADP + phosphate + H(+). Functionally, catalyzes the cleavage of 5-oxoproline to form L-glutamate coupled to the hydrolysis of ATP to ADP and inorganic phosphate. In Staphylococcus aureus (strain MW2), this protein is 5-oxoprolinase subunit A.